The following is a 334-amino-acid chain: Glyoxylate reductase (334 aa).

NADP(+) contacts are provided by residues 158-161, 180-182, and 239-241; these read FGRI, SRT, and IAR. Active-site residues include Arg-241 and Glu-270. The active-site Proton donor is the His-288. 288–290 contacts NADP(+); sequence HIG.

It belongs to the D-isomer specific 2-hydroxyacid dehydrogenase family. GyaR subfamily. As to quaternary structure, homodimer.

Its subcellular location is the cytoplasm. The catalysed reaction is glycolate + NAD(+) = glyoxylate + NADH + H(+). The sequence is that of Glyoxylate reductase from Thermococcus onnurineus (strain NA1).